Consider the following 124-residue polypeptide: UPF0102 protein Noca_3248 (124 aa).

Belongs to the UPF0102 family.

This chain is UPF0102 protein Noca_3248, found in Nocardioides sp. (strain ATCC BAA-499 / JS614).